A 267-amino-acid chain; its full sequence is Glutamate racemase (267 aa).

Substrate-binding positions include 13–14 (DS) and 45–46 (YG). Residue Cys-77 is the Proton donor/acceptor of the active site. 78 to 79 (NT) is a binding site for substrate. The active-site Proton donor/acceptor is Cys-192. Position 193-194 (193-194 (TH)) interacts with substrate.

The protein belongs to the aspartate/glutamate racemases family.

The catalysed reaction is L-glutamate = D-glutamate. It functions in the pathway cell wall biogenesis; peptidoglycan biosynthesis. Functionally, provides the (R)-glutamate required for cell wall biosynthesis. The chain is Glutamate racemase from Sinorhizobium fredii (strain NBRC 101917 / NGR234).